The following is a 278-amino-acid chain: Urease accessory protein UreD (278 aa).

The protein belongs to the UreD family. UreD, UreF and UreG form a complex that acts as a GTP-hydrolysis-dependent molecular chaperone, activating the urease apoprotein by helping to assemble the nickel containing metallocenter of UreC. The UreE protein probably delivers the nickel.

Its subcellular location is the cytoplasm. In terms of biological role, required for maturation of urease via the functional incorporation of the urease nickel metallocenter. The protein is Urease accessory protein UreD of Staphylococcus aureus (strain JH1).